The chain runs to 303 residues: MRHFLNINAIELDDVVDLVHRALAIKAGRSVIQSNLTVTNLFFENSTRTHSSFQMAENRLGYQQIDIDPQQSSMSKGESLTDTLKTLKAIGVDVAVIRHTVNNWYDQVLTATGHEIPHLINAGDGSGQHPSQSLLDLVTIYEQFNHFAGLNIRIVGDLAHSRVARSNAEILHHLGANMTFSGPKDWQPNDFGKFGQFVAIDDDWENLDVVIFLRVQHERITQTENQNFSTKQYHEQFGLNRVRYERLKAAAIIMHPAPVNRDVEIADELVEAPKSRIFEQMNNGVYARMAILEYTTEATHATH.

Carbamoyl phosphate contacts are provided by R48 and T49. K76 contributes to the L-aspartate binding site. R98, H129, and Q132 together coordinate carbamoyl phosphate. The L-aspartate site is built by R162 and R214. The carbamoyl phosphate site is built by A257 and P258.

It belongs to the aspartate/ornithine carbamoyltransferase superfamily. ATCase family. Heterododecamer (2C3:3R2) of six catalytic PyrB chains organized as two trimers (C3), and six regulatory PyrI chains organized as three dimers (R2).

It catalyses the reaction carbamoyl phosphate + L-aspartate = N-carbamoyl-L-aspartate + phosphate + H(+). It functions in the pathway pyrimidine metabolism; UMP biosynthesis via de novo pathway; (S)-dihydroorotate from bicarbonate: step 2/3. In terms of biological role, catalyzes the condensation of carbamoyl phosphate and aspartate to form carbamoyl aspartate and inorganic phosphate, the committed step in the de novo pyrimidine nucleotide biosynthesis pathway. In Leuconostoc citreum (strain KM20), this protein is Aspartate carbamoyltransferase catalytic subunit.